Consider the following 307-residue polypeptide: tRNA dimethylallyltransferase 2 (307 aa).

9–16 lines the ATP pocket; the sequence is GPTAVGKT. 11–16 contacts substrate; that stretch reads TAVGKT. The tract at residues 34–37 is interaction with substrate tRNA; sequence DSRQ.

It belongs to the IPP transferase family. Monomer. The cofactor is Mg(2+).

The catalysed reaction is adenosine(37) in tRNA + dimethylallyl diphosphate = N(6)-dimethylallyladenosine(37) in tRNA + diphosphate. Its function is as follows. Catalyzes the transfer of a dimethylallyl group onto the adenine at position 37 in tRNAs that read codons beginning with uridine, leading to the formation of N6-(dimethylallyl)adenosine (i(6)A). This chain is tRNA dimethylallyltransferase 2, found in Azobacteroides pseudotrichonymphae genomovar. CFP2.